We begin with the raw amino-acid sequence, 560 residues long: General negative regulator of transcription subunit 5 (560 aa).

3 coiled-coil regions span residues 3–26 (QRKL…DFDD), 37–71 (SNSS…SKED), and 124–177 (KRDQ…NEMD). The interval 212–330 (CEIQPSSSNN…DSEQQLNFPP (119 aa)) is disordered. Polar residues predominate over residues 215-237 (QPSSSNNEAPKEGNNQTSLSSIR). Positions 273–288 (SQSISSTPTPVSTDTP) are enriched in low complexity. The span at 299 to 311 (FDNSTLGTPTTHV) shows a compositional bias: polar residues. Thr306 bears the Phosphothreonine mark. A Glycyl lysine isopeptide (Lys-Gly) (interchain with G-Cter in ubiquitin) cross-link involves residue Lys338. Residue Ser377 is modified to Phosphoserine.

The protein belongs to the CNOT2/3/5 family. As to quaternary structure, forms a NOT protein complex that comprises NOT1, NOT2, NOT3, NOT4 and NOT5. Subunit of the 1.0 MDa CCR4-NOT core complex that contains CCR4, CAF1, NOT1, NOT2, NOT3, NOT4, NOT5, CAF40 and CAF130. In the complex interacts with NOT1 and NOT2. The core complex probably is part of a less characterized 1.9 MDa CCR4-NOT complex.

The protein localises to the cytoplasm. It is found in the nucleus. Functionally, acts as a component of the CCR4-NOT core complex, which in the nucleus seems to be a general transcription factor, and in the cytoplasm the major mRNA deadenylase involved in mRNA turnover. The NOT protein subcomplex negatively regulates the basal and activated transcription of many genes. Preferentially affects TC-type TATA element-dependent transcription. Could directly or indirectly inhibit component(s) of the general transcription machinery. The polypeptide is General negative regulator of transcription subunit 5 (NOT5) (Saccharomyces cerevisiae (strain ATCC 204508 / S288c) (Baker's yeast)).